Here is a 224-residue protein sequence, read N- to C-terminus: Charged multivesicular body protein 4c (224 aa).

Disordered regions lie at residues 1 to 21 (MSVF…PTPQ) and 182 to 224 (SGPE…AWAM). Residues 7-17 (LFGGGGKGGKG) show a composition bias toward gly residues. Positions 21-221 (QEAIQKLRET…DEDDMEELKA (201 aa)) form a coiled coil.

This sequence belongs to the SNF7 family. In terms of assembly, probable core component of the endosomal sorting required for transport complex III (ESCRT-III). ESCRT-III components are thought to multimerize to form a flat lattice on the perimeter membrane of the endosome.

Its subcellular location is the cytoplasm. It is found in the cytosol. The protein resides in the late endosome membrane. Probable core component of the endosomal sorting required for transport complex III (ESCRT-III) which is involved in multivesicular bodies (MVBs) formation and sorting of endosomal cargo proteins into MVBs. MVBs contain intraluminal vesicles (ILVs) that are generated by invagination and scission from the limiting membrane of the endosome and mostly are delivered to lysosomes enabling degradation of membrane proteins, such as stimulated growth factor receptors, lysosomal enzymes and lipids. Key component of the cytokinesis checkpoint, a process required to delay abscission to prevent both premature resolution of intercellular chromosome bridges and accumulation of DNA damage. This is Charged multivesicular body protein 4c (chmp4c) from Danio rerio (Zebrafish).